Reading from the N-terminus, the 349-residue chain is Galanin receptor type 1 (349 aa).

The Extracellular segment spans residues 1–36; that stretch reads MELAVGNLSEGNASWPEPPAPEPGPLFGIGVENFVT. 2 N-linked (GlcNAc...) asparagine glycosylation sites follow: asparagine 7 and asparagine 12. A helical membrane pass occupies residues 37 to 57; sequence LVVFGLIFALGVLGNSLVITV. Residues 58-70 are Cytoplasmic-facing; it reads LARSKPGKPRSTT. The chain crosses the membrane as a helical span at residues 71-91; the sequence is NLFILNLSIADLAYLLFCIPF. Over 92 to 109 the chain is Extracellular; that stretch reads QATVYALPTWVLGAFICK. Cysteine 108 and cysteine 187 are oxidised to a cystine. The helical transmembrane segment at 110-131 threads the bilayer; that stretch reads FIHYFFTVSMLVSIFTLAAMSV. The Cytoplasmic portion of the chain corresponds to 132-151; sequence DRYVAIVHSRRSSSLRVSRN. Residues 152–172 traverse the membrane as a helical segment; sequence ALLGVGCIWALSIAMASPVAY. The Extracellular segment spans residues 173–200; that stretch reads HQGLFHPRASNQTFCWEQWPDPRHKKAY. A glycan (N-linked (GlcNAc...) asparagine) is linked at asparagine 183. Residues 201–221 form a helical membrane-spanning segment; that stretch reads VVCTFVFGYLLPLLLICFCYA. Over 222-248 the chain is Cytoplasmic; that stretch reads KVLNHLHKKLKNMSKKSEASKKKTAQT. The helical transmembrane segment at 249–269 threads the bilayer; the sequence is VLVVVVVFGISWLPHHIIHLW. Residues 270 to 271 are Extracellular-facing; sequence AE. The chain crosses the membrane as a helical span at residues 272–292; sequence FGVFPLTPASFLFRITAHCLA. At 293–349 the chain is on the cytoplasmic side; sequence YSNSSVNPIIYAFLSENFRKAYKQVFKCHIRKDSHLSDTKESKSRIDTPPSTNCTHV. Cysteine 320 is lipidated: S-palmitoyl cysteine.

The protein belongs to the G-protein coupled receptor 1 family. In terms of assembly, interacts with GRP39 AND HTR1A. In terms of processing, palmitoylated on at least one of the three cysteine residues present in the C-terminal part.

The protein resides in the cell membrane. In terms of biological role, receptor for the hormone galanin. The activity of this receptor is mediated by G proteins that inhibit adenylate cyclase activity. The sequence is that of Galanin receptor type 1 (GALR1) from Homo sapiens (Human).